The sequence spans 470 residues: MREDTFFFQWWFLVSGLSFIFLLPQAFTYHTPPINPCFAHPFLPPITNPRLLKAFTALQAWKFTITSDPNGFTSNWCGPNVCNYTGVFCAPALDNPYVLTVAGIDLNHANIAGYLPLELGLLTDLALFHINSNRFQGQLPKTLKCLHLLHELDVSNNKLSGEFPSVIFSLPSLKFLDIRFNEFQGDVPSQLFDLNLDALFINDNKFQFRLPRNIGNSPVSVLVLANNDLQGSCVPPSFYKMGKTLHEIIITNSQLTGCLNREIGLLNQLTVFDVSYNNLVGSLPETIGDMKSLEQLNIAHNKFSGYIPESICRLPRLENFTYSYNFFSGEPPACLRLQEFDDRRNCLPSRPMQRSLAECKSFSSYPIDCASFGCSPPSPPPPPPPPPPPPPPPPPPPPPPPPPPPPPYVYPSPPPPPPSPPPYVYPPPPPPYVYPPPPSPPYVYPPPPPSPQPYMYPSPPCNDLPTPVHY.

Positions 1 to 28 (MREDTFFFQWWFLVSGLSFIFLLPQAFT) are cleaved as a signal peptide. An N-linked (GlcNAc...) asparagine glycan is attached at Asn83. LRR repeat units lie at residues 98 to 122 (VLTV…LGLL), 123 to 146 (TDLA…LKCL), 147 to 170 (HLLH…IFSL), 171 to 194 (PSLK…LFDL), 196 to 217 (LDAL…IGNS), 219 to 241 (VSVL…FYKM), 243 to 265 (KTLH…EIGL), 266 to 290 (LNQL…IGDM), 291 to 314 (KSLE…ICRL), and 316 to 337 (RLEN…CLRL). Asn319 carries N-linked (GlcNAc...) asparagine glycosylation. Positions 378 to 411 (SPPPPPPPPPPPPPPPPPPPPPPPPPPPPPYVYP) are disordered. The tract at residues 378–470 (SPPPPPPPPP…CNDLPTPVHY (93 aa)) is contains the Ser-Pro(4) repeats.

Post-translationally, hydroxylated on proline residues in the S-P-P-P-P repeat. O-glycosylated on hydroxyprolines. Expressed in roots.

The protein resides in the secreted. The protein localises to the cell wall. Modulates cell morphogenesis by regulating cell wall formation and assembly, and/or growth polarization. The polypeptide is Leucine-rich repeat extensin-like protein 6 (LRX6) (Arabidopsis thaliana (Mouse-ear cress)).